The sequence spans 548 residues: Tyrosine-protein phosphatase non-receptor type 61F (548 aa).

The Cytoplasmic portion of the chain corresponds to 1 to 525 (MSEQKTSGSG…KQLAAKKRRS (525 aa)). The Tyrosine-protein phosphatase domain occupies 33–296 (FYKEICETCD…DFSYQAIIEG (264 aa)). The tract at residues 46 to 65 (KEKQFSTSESERHTNRGLNR) is disordered. Phosphoserine is present on S83. Phosphotyrosine is present on Y86. Substrate contacts are provided by residues D203, 237–243 (CSAGIGR), and Q281. C237 (phosphocysteine intermediate) is an active-site residue. 3 short sequence motifs (PXXP motif (SH3-binding)) span residues 327 to 330 (PPLP), 339 to 342 (PLAP), and 394 to 397 (PPLP). Residues 386–517 (EVADSRPLPP…RKQRENEDKQ (132 aa)) form a disordered region. Residues 404–428 (SDSDEDYLLDDDDEDDTDEDEEYET) are compositionally biased toward acidic residues. Short sequence motifs (PXXP motif (SH3-binding)) lie at residues 459–462 (PAVP) and 480–483 (PASP). A compositionally biased stretch (basic and acidic residues) spans 502–517 (KVNDMKRKQRENEDKQ). A helical transmembrane segment spans residues 526–545 (LLTYIAAGVVVGVICAYAYT). The Extracellular portion of the chain corresponds to 546-548 (KLG).

Belongs to the protein-tyrosine phosphatase family. Non-receptor class 1 subfamily. In terms of assembly, interacts (via C-terminus) with dock/dreadlocks; this interaction is independent of insulin stimulation and is required for dephosphorylation of the insulin-like receptor InR.

The protein resides in the cytoplasm. The protein localises to the membrane. It localises to the endomembrane system. It is found in the nucleus. The catalysed reaction is O-phospho-L-tyrosyl-[protein] + H2O = L-tyrosyl-[protein] + phosphate. Non-receptor protein tyrosine phosphatase. Required for maintaining dock/dreadlocks in its non-phosphorylated state. Negative regulator of InR/insulin-like receptor signaling through dephosphorylation of tyrosines when recruited by dock/dreadlocks. The polypeptide is Tyrosine-protein phosphatase non-receptor type 61F (Drosophila melanogaster (Fruit fly)).